Here is a 542-residue protein sequence, read N- to C-terminus: GATA-type transcription factor sreA (542 aa).

Positions 1 to 10 (MLTLRSSSDT) are enriched in polar residues. Residues 1–172 (MLTLRSSSDT…SAQNASGCGS (172 aa)) are disordered. Positions 44 to 63 (ADLRPDSFDASRSPDGDKAS) are enriched in basic and acidic residues. Composition is skewed to low complexity over residues 75–117 (SSDQ…PKAS) and 148–168 (SSTS…QNAS). Positions 178–196 (CPGGGSCNGTGGAVGCDGC) are cystein-rich region (CRR). A compositionally biased stretch (low complexity) spans 210–223 (APSARQARASPSAQ). The segment at 210-248 (APSARQARASPSAQTSEEQAQSGLDALDSASQDASGMPK) is disordered. The segment at 250-274 (CQNCGTTLTPLWRRDDQGNTICNAC) adopts a GATA-type zinc-finger fold. Residues 289–300 (MKKTVIKRRKRV) show a composition bias toward basic residues. Disordered regions lie at residues 289 to 408 (MKKT…PATR) and 461 to 525 (SNAP…REAE). Composition is skewed to polar residues over residues 311-320 (AGSSDNSSVS) and 369-387 (KPTQ…NHSP). Residues 396 to 407 (ESTSAESAPPAT) are compositionally biased toward low complexity. The span at 464-483 (PARSQTQTQPQPGTRSYSPN) shows a compositional bias: polar residues. Residues 510-542 (DKVKAARRAQLQREAENMREALRAKERELASLK) adopt a coiled-coil conformation.

It localises to the nucleus. In terms of biological role, GATA-type transcription repressor that regulates iron acquisition genes through specific binding the GATA sequence elements of target promoters. SreA targets include genes encoding a number of key iron-regulated factors such as the siderophore biosynthesis genes. Is dispensable for growth on keratin substrates. SreA represses the expression of hapX and the siderophore system during iron sufficient conditions by an iron-sensing mechanism, while hapX represses sreA and activates the siderophore system during iron-limiting conditions resulting in efficient iron uptake and inhibition of iron-consuming pathways. The protein is GATA-type transcription factor sreA of Arthroderma benhamiae (strain ATCC MYA-4681 / CBS 112371) (Trichophyton mentagrophytes).